We begin with the raw amino-acid sequence, 111 residues long: Ig kappa chain V-III region MOPC 70 (111 aa).

The tract at residues 1-23 is framework-1; sequence DIVLTQSPASLAVSLGQRATISC. Residues cysteine 23 and cysteine 92 are joined by a disulfide bond. The tract at residues 24-38 is complementarity-determining-1; that stretch reads RASESVDNSGISFMN. The segment at 39–53 is framework-2; that stretch reads WFQQKPGQPPKLLIY. Positions 54–60 are complementarity-determining-2; sequence AASNQGS. The framework-3 stretch occupies residues 61–92; the sequence is GVPARFSGSGSGTDFSLNIHPMEEDDTAMYFC. Positions 93-101 are complementarity-determining-3; it reads QQSKEVPWT. The framework-4 stretch occupies residues 102 to 111; sequence FGGGTKLEIK.

This chain is Ig kappa chain V-III region MOPC 70, found in Mus musculus (Mouse).